The chain runs to 173 residues: Translation initiation factor IF-3 (173 aa).

It belongs to the IF-3 family. As to quaternary structure, monomer.

The protein localises to the cytoplasm. Functionally, IF-3 binds to the 30S ribosomal subunit and shifts the equilibrium between 70S ribosomes and their 50S and 30S subunits in favor of the free subunits, thus enhancing the availability of 30S subunits on which protein synthesis initiation begins. The polypeptide is Translation initiation factor IF-3 (Enterococcus faecalis (strain ATCC 700802 / V583)).